The following is a 269-amino-acid chain: MNIDMNWLGQLLGSDWEIFPAGGATGDAYYAKHNGQQLFLKRNSSPFLAVLSAEGIVPKLVWTKRMENGDVITAQHWMTGRELKPKDMSGRPVAELLRKIHTSKALLDMLKRLGKEPLNPGALLSQLKQAVFAVQQSSPLIQEGIKYLEEHLHEVHFGEKVVCHCDVNHNNWLLSEDNQLYLIDWDGAMIADPAMDLGPLLYHYVEKPAWESWLSMYGIELTESLRLRMAWYVLSETITFIAWHKAKGNDKEFHDAMEELHILMKRIVD.

The ATP site is built by F39, H76, W77, M78, and G80. Positions 164–171 match the Brenner's motif [HXDhX3N] motif; it reads HCDVNHNN. D166 (proton acceptor) is an active-site residue. The APH motif lies at 180 to 203; that stretch reads LYLIDWDGAMIADPAMDLGPLLYH.

The protein belongs to the aminoglycoside phosphotransferase family. In terms of assembly, monomer in solution. Interacts with DnaA (via domains I (1-82) and III (111-326)). Interacts with DnaB. Interacts with FtsZ.

The protein resides in the cytoplasm. It catalyses the reaction D-ribose + ATP = D-ribose 5-phosphate + ADP + H(+). The catalysed reaction is 2-deoxy-D-ribose + ATP = 2-deoxy-D-ribose 5-phosphate + ADP + H(+). With respect to regulation, activated by D-ribose and 2-deoxy-D-ribose. Slightly activated by kanamycin and gentamicin. Its function is as follows. Plays a role in cell cycle regulation and chromosome integrity. Activates DnaA-dependent chromosomal DNA replication initiation ensuring that the chromosome is replicated at the right time during the cell cycle. May regulate replication initiation through phosphorylation of a possible second messenger or metabolite, and by interacting with replication initiation proteins. Has ATPase activity with D-ribose and 2-deoxy-D-ribose in vitro, but not with choline. Involved in DNA damage response. The chain is Cell cycle regulator CcrZ from Bacillus subtilis (strain 168).